A 131-amino-acid polypeptide reads, in one-letter code: Methylglyoxal synthase (131 aa).

Residues Met1–Lys131 enclose the MGS-like domain. Residues His8, Lys12, Thr34–Thr37, and Ser54–Gly55 each bind substrate. The active-site Proton donor/acceptor is Asp60. His87 is a substrate binding site.

It belongs to the methylglyoxal synthase family.

It catalyses the reaction dihydroxyacetone phosphate = methylglyoxal + phosphate. Functionally, catalyzes the formation of methylglyoxal from dihydroxyacetone phosphate. The polypeptide is Methylglyoxal synthase (Bacillus cereus (strain ATCC 10987 / NRS 248)).